A 631-amino-acid chain; its full sequence is PTS system beta-glucoside-specific EIIBCA component (631 aa).

The PTS EIIB type-1 domain occupies 1–86 (MNYETLASEI…LSLDGMARFS (86 aa)). Catalysis depends on cysteine 26, which acts as the Phosphocysteine intermediate; for EIIB activity. One can recognise a PTS EIIC type-1 domain in the interval 105 to 466 (DIISSIFTPF…DETQPAAADS (362 aa)). 10 consecutive transmembrane segments (helical) span residues 120–140 (ATGI…ISES), 146–166 (LLFA…GYTA), 175–195 (FTTL…AFNA), 206–226 (FLGI…ILFA), 248–268 (FFTP…LIGP), 295–315 (VMGA…FVPL), 328–348 (LLPL…GVLL), 358–378 (IAGS…VYGV), 385–405 (PFIF…YAHT), and 434–454 (AVIG…SFGV). The region spanning 501–605 (DRTFASGVMG…DLTTPIVITN (105 aa)) is the PTS EIIA type-1 domain. Histidine 553 (tele-phosphohistidine intermediate; for EIIA activity) is an active-site residue.

The protein resides in the cell inner membrane. Functionally, the phosphoenolpyruvate-dependent sugar phosphotransferase system (sugar PTS), a major carbohydrate active -transport system, catalyzes the phosphorylation of incoming sugar substrates concomitantly with their translocation across the cell membrane. This system is involved in beta-glucoside transport. In terms of biological role, acts both as a kinase and as a phosphatase on ArbG. This is PTS system beta-glucoside-specific EIIBCA component (arbF) from Dickeya chrysanthemi (Pectobacterium chrysanthemi).